The sequence spans 170 residues: Vimentin A1 (170 aa).

A compositionally biased stretch (polar residues) spans 1–10; sequence DLTEAANKSN. Residues 1 to 20 form a disordered region; sequence DLTEAANKSNEALRLAKQES. Residues 1–111 form a coil 2 region; that stretch reads DLTEAANKSN…ATYRKLLEGE (111 aa). Residues 1-115 form the IF rod domain; sequence DLTEAANKSN…KLLEGEESRI (115 aa). Positions 112–170 are tail; the sequence is ESRISTPLPNFSSFNLRETMLELKPNIESTFTKKVLIKTIETRDGQVLNESTQNHDDLE.

This sequence belongs to the intermediate filament family. In terms of assembly, homomer. One of the most prominent phosphoproteins in various cells of mesenchymal origin. Phosphorylation is enhanced during cell division, at which time vimentin filaments are significantly reorganized. In terms of tissue distribution, expressed in low amounts in retina, optic nerve, and brain and in higher amounts in spinal cord.

Vimentins are class-III intermediate filaments found in various non-epithelial cells, especially mesenchymal cells. Vimentin is attached to the nucleus, endoplasmic reticulum, and mitochondria, either laterally or terminally. This Carassius auratus (Goldfish) protein is Vimentin A1.